A 356-amino-acid polypeptide reads, in one-letter code: Transcription factor MafB (356 aa).

Disordered stretches follow at residues 49–79 and 140–240; these read RLQP…PTEQ and YRGA…LNVE. Residues 55-77 show a composition bias toward low complexity; sequence SVSSTPISTPCSSVPSSPSFSPT. 2 stretches are compositionally biased toward basic residues: residues 183-196 and 212-223; these read AHGH…HHHH and HHRHHHHHHPHG. Positions 270-295 are basic motif; the sequence is RLKQKRRTLKNRGYAQSCRFKRVQQK. Positions 270–333 constitute a bZIP domain; it reads RLKQKRRTLK…DAYKLKCEKL (64 aa). A leucine-zipper region spans residues 298–319; the sequence is LENEKTQLINQVEQLKQEINRL.

The protein belongs to the bZIP family. Maf subfamily. In terms of assembly, homodimer or heterodimer with other bHLH-Zip transcription factors. Binds DNA as a homodimer or a heterodimer.

It localises to the nucleus. Its function is as follows. May act as a transcriptional activator or repressor. Involved in neurogenesis. Involved in the development of rhombomeres (r) 5 and 6 segments from their common precursor 'proto-segment' in the hindbrain. In Danio rerio (Zebrafish), this protein is Transcription factor MafB (mafb).